The sequence spans 93 residues: Corticostatin 1 (93 aa).

The signal sequence occupies residues 1–19 (MRTLILLAAILLAALQAQA). A propeptide spanning residues 20–59 (ELFSVNVDEVLDQQQPGSDQDLVIHLTGEESSALQVPDTK) is cleaved from the precursor. 3 cysteine pairs are disulfide-bonded: C62-C90, C64-C79, and C69-C89.

The protein belongs to the alpha-defensin family.

The protein localises to the secreted. Microbicidal activity and inhibits corticotropin (ACTH) stimulated corticosterone production. This is Corticostatin 1 from Oryctolagus cuniculus (Rabbit).